A 386-amino-acid polypeptide reads, in one-letter code: O-methyltransferase 10 (386 aa).

S-adenosyl-L-homocysteine-binding residues include Ser207, Gly231, Asp254, Asp274, and Lys288. Asp254 contributes to the S-adenosyl-L-methionine binding site. His292 acts as the Proton acceptor in catalysis.

The protein belongs to the class I-like SAM-binding methyltransferase superfamily. Cation-independent O-methyltransferase family. Homodimer.

It catalyses the reaction dopamine + S-adenosyl-L-methionine = 4-methoxytyramine + S-adenosyl-L-homocysteine + H(+). It carries out the reaction 3,4-dihydroxy-5-methoxyphenethylamine + S-adenosyl-L-methionine = 3-hydroxy-4,5-dimethoxyphenethylamine + S-adenosyl-L-homocysteine + H(+). The enzyme catalyses 3-hydroxy-4,5-dimethoxyphenethylamine + S-adenosyl-L-methionine = mescaline + S-adenosyl-L-homocysteine + H(+). The catalysed reaction is 4-hydroxy-3,5-dimethoxyphenethylamine + S-adenosyl-L-methionine = mescaline + S-adenosyl-L-homocysteine + H(+). The protein operates within aromatic compound metabolism. It functions in the pathway alkaloid biosynthesis. Functionally, O-methyltransferase participating in the biosynthesis of natural products derived from phenylethylamine, including mescaline, a natural hallucinogen potentially used in psychotherapeutic treatments. Catalyzes the O-methylation of mescaline para hydroxyl groups, using dopamine, 3,4-dihydroxy-5-methoxyphenethylamine, 3-hydroxy-4,5-dimethoxyphenethylamine and 4-hydroxy-3,5-dimethoxyphenethylamine as substrates. The chain is O-methyltransferase 10 from Lophophora williamsii (Peyote).